A 407-amino-acid polypeptide reads, in one-letter code: Phosphopentomutase (407 aa).

Mn(2+)-binding residues include Asp10, Asp306, His311, Asp347, His348, and His359.

This sequence belongs to the phosphopentomutase family. Mn(2+) is required as a cofactor.

The protein localises to the cytoplasm. The enzyme catalyses 2-deoxy-alpha-D-ribose 1-phosphate = 2-deoxy-D-ribose 5-phosphate. It carries out the reaction alpha-D-ribose 1-phosphate = D-ribose 5-phosphate. It functions in the pathway carbohydrate degradation; 2-deoxy-D-ribose 1-phosphate degradation; D-glyceraldehyde 3-phosphate and acetaldehyde from 2-deoxy-alpha-D-ribose 1-phosphate: step 1/2. In terms of biological role, isomerase that catalyzes the conversion of deoxy-ribose 1-phosphate (dRib-1-P) and ribose 1-phosphate (Rib-1-P) to deoxy-ribose 5-phosphate (dRib-5-P) and ribose 5-phosphate (Rib-5-P), respectively. This is Phosphopentomutase from Serratia proteamaculans (strain 568).